The sequence spans 269 residues: D-aminoacyl-tRNA deacylase (269 aa).

It belongs to the DtdA deacylase family. In terms of assembly, monomer. Zn(2+) is required as a cofactor.

The enzyme catalyses a D-aminoacyl-tRNA + H2O = a tRNA + a D-alpha-amino acid + H(+). The catalysed reaction is glycyl-tRNA(Ala) + H2O = tRNA(Ala) + glycine + H(+). In terms of biological role, D-aminoacyl-tRNA deacylase with broad substrate specificity. By recycling D-aminoacyl-tRNA to D-amino acids and free tRNA molecules, this enzyme counteracts the toxicity associated with the formation of D-aminoacyl-tRNA entities in vivo. This chain is D-aminoacyl-tRNA deacylase, found in Caldivirga maquilingensis (strain ATCC 700844 / DSM 13496 / JCM 10307 / IC-167).